A 116-amino-acid chain; its full sequence is Vesicle-associated membrane protein 2 (116 aa).

A disordered region spans residues 1-33 (MSATAATAPPAAPAGEGGPPAPPPNLTSNRRLQ). Residue Ser-2 is modified to N-acetylserine. Topologically, residues 2–94 (SATAATAPPA…KRKYWWKNLK (93 aa)) are cytoplasmic. A v-SNARE coiled-coil homology domain is found at 31–91 (RLQQTQAQVD…AKLKRKYWWK (61 aa)). The segment at 92 to 116 (NLKMMIILGVICAIILIIIIVYFSS) is required for interaction with SEPT8. Residues 95–114 (MMIILGVICAIILIIIIVYF) traverse the membrane as a helical; Anchor for type IV membrane protein segment. The Vesicular segment spans residues 115–116 (SS).

Belongs to the synaptobrevin family. Part of the SNARE core complex containing SNAP25, VAMP2 and STX1A; this complex constitutes the basic catalytic machinery of the complex neurotransmitter release apparatus. Recruited to the SNARE complex following binding of the SNARE complex component STX1A to STXBP1. This complex binds to CPLX1. Interacts with POPDC1 and STX4. Interacts with VAPA and VAPB. Interacts with WDFY2, PRKCZ and PRKCI. Forms a complex with WDFY2 and PRKCZ. Interacts (via N-terminus) with KCNB1 (via N-terminus and C-terminus); stimulates the channel inactivation rate of KCNB1. Interacts with SEPT8; the interaction inhibits interaction of VAMP2 with SYP. Interacts with SYP; the interaction is inhibited by interaction with SEPT8. Interacts with PICALM. Interacts with alpha-synuclein/SNCA. Interacts with STX3. Post-translationally, phosphorylated by PRKCZ in vitro and this phosphorylation is increased in the presence of WDFY2.

Its subcellular location is the cytoplasmic vesicle. It localises to the secretory vesicle. It is found in the synaptic vesicle membrane. The protein resides in the cell membrane. Involved in the targeting and/or fusion of transport vesicles to their target membrane. Major SNARE protein of synaptic vesicles which mediates fusion of synaptic vesicles to release neurotransmitters. Essential for fast vesicular exocytosis and activity-dependent neurotransmitter release as well as fast endocytosis that mediates rapid reuse of synaptic vesicles. Modulates the gating characteristics of the delayed rectifier voltage-dependent potassium channel KCNB1. This is Vesicle-associated membrane protein 2 (VAMP2) from Bos taurus (Bovine).